The chain runs to 458 residues: Adenylosuccinate synthetase (458 aa).

Residues 17–23 (GDEGKGK) and 45–47 (GHT) contribute to the GTP site. The active-site Proton acceptor is the D18. D18 and G45 together coordinate Mg(2+). Residues 18 to 21 (DEGK), 43 to 46 (NAGH), T137, R151, Q247, T262, and R330 contribute to the IMP site. H46 serves as the catalytic Proton donor. Substrate is bound at residue 326-332 (VTTGRSR). Residues R332, 358-360 (KLD), and 440-442 (STS) each bind GTP.

Belongs to the adenylosuccinate synthetase family. As to quaternary structure, homodimer. Mg(2+) serves as cofactor.

It localises to the cytoplasm. The enzyme catalyses IMP + L-aspartate + GTP = N(6)-(1,2-dicarboxyethyl)-AMP + GDP + phosphate + 2 H(+). It participates in purine metabolism; AMP biosynthesis via de novo pathway; AMP from IMP: step 1/2. Its function is as follows. Plays an important role in the de novo pathway of purine nucleotide biosynthesis. Catalyzes the first committed step in the biosynthesis of AMP from IMP. The chain is Adenylosuccinate synthetase from Acidovorax ebreus (strain TPSY) (Diaphorobacter sp. (strain TPSY)).